The primary structure comprises 163 residues: MFRQLRLTMDISGWIFMPWRRSLSNKQSPPPPLASTINDVIVDYDDPDYLPLPEYPVRPNEPLDIRKQRLLYQSRKRGMLENDLLLSTFAAKYLDNFNAEQTAQYDQLINGVSNDWDIYYWATDVKPTPKEYDTEIMRLLKDHVKNAERISRIRQPDLYSSES.

The transit peptide at 1 to 23 (MFRQLRLTMDISGWIFMPWRRSL) directs the protein to the mitochondrion.

It belongs to the SDHAF2 family. Interacts with the flavoprotein subunit within the SDH catalytic dimer.

It is found in the mitochondrion matrix. Plays an essential role in the assembly of succinate dehydrogenase (SDH), an enzyme complex (also referred to as respiratory complex II) that is a component of both the tricarboxylic acid (TCA) cycle and the mitochondrial electron transport chain, and which couples the oxidation of succinate to fumarate with the reduction of ubiquinone (coenzyme Q) to ubiquinol. Required for flavinylation (covalent attachment of FAD) of the flavoprotein subunit of the SDH catalytic dimer. The polypeptide is Succinate dehydrogenase assembly factor 2-B, mitochondrial (Drosophila ananassae (Fruit fly)).